A 450-amino-acid polypeptide reads, in one-letter code: Tubulin alpha chain, testis-specific (450 aa).

The short motif at 1-4 (MREC) is the MREC motif element. Position 11 (Gln-11) interacts with GTP. Position 40 is an N6-acetyllysine (Lys-40). GTP contacts are provided by Glu-71, Ser-140, Gly-144, Thr-145, Thr-179, Asn-206, and Asn-228. Position 71 (Glu-71) interacts with Mg(2+). Glu-254 is a catalytic residue.

This sequence belongs to the tubulin family. As to quaternary structure, dimer of alpha and beta chains. A typical microtubule is a hollow water-filled tube with an outer diameter of 25 nm and an inner diameter of 15 nM. Alpha-beta heterodimers associate head-to-tail to form protofilaments running lengthwise along the microtubule wall with the beta-tubulin subunit facing the microtubule plus end conferring a structural polarity. Microtubules usually have 13 protofilaments but different protofilament numbers can be found in some organisms and specialized cells. Mg(2+) serves as cofactor. In terms of processing, some glutamate residues at the C-terminus are polyglycylated, resulting in polyglycine chains on the gamma-carboxyl group. Glycylation is mainly limited to tubulin incorporated into axonemes (cilia and flagella) whereas glutamylation is prevalent in neuronal cells, centrioles, axonemes, and the mitotic spindle. Both modifications can coexist on the same protein on adjacent residues, and lowering polyglycylation levels increases polyglutamylation, and reciprocally. The precise function of polyglycylation is still unclear. Some glutamate residues at the C-terminus are polyglutamylated, resulting in polyglutamate chains on the gamma-carboxyl group. Polyglutamylation plays a key role in microtubule severing by spastin (SPAST). SPAST preferentially recognizes and acts on microtubules decorated with short polyglutamate tails: severing activity by SPAST increases as the number of glutamates per tubulin rises from one to eight, but decreases beyond this glutamylation threshold. Post-translationally, acetylation of alpha chains at Lys-40 is located inside the microtubule lumen. This modification has been correlated with increased microtubule stability, intracellular transport and ciliary assembly. In terms of processing, undergoes a tyrosination/detyrosination cycle, the cyclic removal and re-addition of a C-terminal tyrosine residue by the enzymes tubulin tyrosine carboxypeptidase (MATCAP, VASH1 or VASH2) and tubulin tyrosine ligase (TTL), respectively. Tyrosination promotes microtubule interaction with CAP-Gly microtubule plus-end tracking proteins. Tyrosinated tubulins regulate the initiation of dynein-driven motility. Post-translationally, detyrosination is involved in metaphase plate congression by guiding chromosomes during mitosis. Detyrosination increases microtubules-dependent mechanotransduction in dystrophic cardiac and skeletal muscle. In cardiomyocytes, detyrosinated microtubules are required to resist to contractile compression during contraction. As to expression, testis specific.

Its subcellular location is the cytoplasm. It localises to the cytoskeleton. The catalysed reaction is GTP + H2O = GDP + phosphate + H(+). Its function is as follows. Tubulin is the major constituent of microtubules, a cylinder consisting of laterally associated linear protofilaments composed of alpha- and beta-tubulin heterodimers. Microtubules grow by the addition of GTP-tubulin dimers to the microtubule end, where a stabilizing cap forms. Below the cap, tubulin dimers are in GDP-bound state, owing to GTPase activity of alpha-tubulin. This is Tubulin alpha chain, testis-specific from Oncorhynchus mykiss (Rainbow trout).